A 183-amino-acid polypeptide reads, in one-letter code: ATP synthase subunit delta (183 aa).

It belongs to the ATPase delta chain family. As to quaternary structure, F-type ATPases have 2 components, F(1) - the catalytic core - and F(0) - the membrane proton channel. F(1) has five subunits: alpha(3), beta(3), gamma(1), delta(1), epsilon(1). F(0) has three main subunits: a(1), b(2) and c(10-14). The alpha and beta chains form an alternating ring which encloses part of the gamma chain. F(1) is attached to F(0) by a central stalk formed by the gamma and epsilon chains, while a peripheral stalk is formed by the delta and b chains.

The protein localises to the cell inner membrane. In terms of biological role, f(1)F(0) ATP synthase produces ATP from ADP in the presence of a proton or sodium gradient. F-type ATPases consist of two structural domains, F(1) containing the extramembraneous catalytic core and F(0) containing the membrane proton channel, linked together by a central stalk and a peripheral stalk. During catalysis, ATP synthesis in the catalytic domain of F(1) is coupled via a rotary mechanism of the central stalk subunits to proton translocation. This protein is part of the stalk that links CF(0) to CF(1). It either transmits conformational changes from CF(0) to CF(1) or is implicated in proton conduction. This is ATP synthase subunit delta from Nitratidesulfovibrio vulgaris (strain DSM 19637 / Miyazaki F) (Desulfovibrio vulgaris).